The sequence spans 307 residues: Homoserine kinase (307 aa).

An ATP-binding site is contributed by 92–102 (PLARGLGSSAT).

The protein belongs to the GHMP kinase family. Homoserine kinase subfamily.

It localises to the cytoplasm. The enzyme catalyses L-homoserine + ATP = O-phospho-L-homoserine + ADP + H(+). Its pathway is amino-acid biosynthesis; L-threonine biosynthesis; L-threonine from L-aspartate: step 4/5. Catalyzes the ATP-dependent phosphorylation of L-homoserine to L-homoserine phosphate. This is Homoserine kinase (thrB) from Microchaete diplosiphon (Fremyella diplosiphon).